Consider the following 312-residue polypeptide: 4-hydroxy-3-methylbut-2-enyl diphosphate reductase (312 aa).

Cys-14 serves as a coordination point for [4Fe-4S] cluster. Positions 43 and 76 each coordinate (2E)-4-hydroxy-3-methylbut-2-enyl diphosphate. His-43 and His-76 together coordinate dimethylallyl diphosphate. His-43 and His-76 together coordinate isopentenyl diphosphate. Cys-98 serves as a coordination point for [4Fe-4S] cluster. His-125 serves as a coordination point for (2E)-4-hydroxy-3-methylbut-2-enyl diphosphate. His-125 is a binding site for dimethylallyl diphosphate. His-125 is a binding site for isopentenyl diphosphate. Glu-127 (proton donor) is an active-site residue. Residue Thr-165 participates in (2E)-4-hydroxy-3-methylbut-2-enyl diphosphate binding. Residue Cys-195 participates in [4Fe-4S] cluster binding. (2E)-4-hydroxy-3-methylbut-2-enyl diphosphate is bound by residues Ser-223, Ser-224, Asn-225, and Ser-269. Dimethylallyl diphosphate contacts are provided by Ser-223, Ser-224, Asn-225, and Ser-269. Residues Ser-223, Ser-224, Asn-225, and Ser-269 each coordinate isopentenyl diphosphate.

Belongs to the IspH family. [4Fe-4S] cluster is required as a cofactor.

It carries out the reaction isopentenyl diphosphate + 2 oxidized [2Fe-2S]-[ferredoxin] + H2O = (2E)-4-hydroxy-3-methylbut-2-enyl diphosphate + 2 reduced [2Fe-2S]-[ferredoxin] + 2 H(+). The enzyme catalyses dimethylallyl diphosphate + 2 oxidized [2Fe-2S]-[ferredoxin] + H2O = (2E)-4-hydroxy-3-methylbut-2-enyl diphosphate + 2 reduced [2Fe-2S]-[ferredoxin] + 2 H(+). It participates in isoprenoid biosynthesis; dimethylallyl diphosphate biosynthesis; dimethylallyl diphosphate from (2E)-4-hydroxy-3-methylbutenyl diphosphate: step 1/1. Its pathway is isoprenoid biosynthesis; isopentenyl diphosphate biosynthesis via DXP pathway; isopentenyl diphosphate from 1-deoxy-D-xylulose 5-phosphate: step 6/6. Functionally, catalyzes the conversion of 1-hydroxy-2-methyl-2-(E)-butenyl 4-diphosphate (HMBPP) into a mixture of isopentenyl diphosphate (IPP) and dimethylallyl diphosphate (DMAPP). Acts in the terminal step of the DOXP/MEP pathway for isoprenoid precursor biosynthesis. The polypeptide is 4-hydroxy-3-methylbut-2-enyl diphosphate reductase (Leptospira interrogans serogroup Icterohaemorrhagiae serovar copenhageni (strain Fiocruz L1-130)).